Here is a 440-residue protein sequence, read N- to C-terminus: Protein TENP (440 aa).

In terms of tissue distribution, expressed in developing retina and brain, but not in heart, liver or kidney. In brain, located in a narrow strip in the boundary between the ventricular zone (consisting of proliferating cells) and the intermediate zone (consisting of postmitotic, differentiating cells). Expressed in all major regions of the developing brain, including the myelencephalon, the mesencephalon, the telencephalon and the diencephalon. In the developing retina, expression is scattered across the retinal neural epithelium. Expressed in egg white (at protein level). Expressed in the magnum of the oviduct (at protein level).

Its function is as follows. May play a role in the developmental transition from cell proliferation to cell differentiation during neurogenesis. This is Protein TENP (TENP) from Gallus gallus (Chicken).